The chain runs to 61 residues: MFPLKKSLLLLFFLATINLSLCEQERNAEEERRDEPDERNAEVEKRFFPIVGKLLSGLLGK.

A signal peptide spans 1–22 (MFPLKKSLLLLFFLATINLSLC). Residues 23–46 (EQERNAEEERRDEPDERNAEVEKR) constitute a propeptide that is removed on maturation. Leucine amide is present on Leu59.

This sequence belongs to the frog skin active peptide (FSAP) family. Temporin subfamily. As to expression, expressed by the skin glands.

The protein localises to the secreted. Its function is as follows. Antimicrobial peptide with activity against Gram-positive and Gram-negative bacteria and against fungi. Has been tested against S.aureus (MIC=7.5 ug/mL), B.pumilus (MIC=7.5 ug/mL), B.cereus (MIC=75.0 ug/mL), E.coli (MIC=7.5 ug/mL), B.dysenteriae (MIC=20.0 ug/mL), A.cacoaceticus (MIC=60.0 ug/mL), P.aeruginosa (MIC=5.0 ug/mL) and C.albicans (MIC=5.0 ug/mL). Also shows a weak hemolytic activity. This chain is Temporin-ALi, found in Amolops loloensis (Lolokou Sucker Frog).